Consider the following 240-residue polypeptide: tRNA1(Val) (adenine(37)-N6)-methyltransferase (240 aa).

This sequence belongs to the methyltransferase superfamily. tRNA (adenine-N(6)-)-methyltransferase family.

It localises to the cytoplasm. It carries out the reaction adenosine(37) in tRNA1(Val) + S-adenosyl-L-methionine = N(6)-methyladenosine(37) in tRNA1(Val) + S-adenosyl-L-homocysteine + H(+). In terms of biological role, specifically methylates the adenine in position 37 of tRNA(1)(Val) (anticodon cmo5UAC). The chain is tRNA1(Val) (adenine(37)-N6)-methyltransferase from Photobacterium profundum (strain SS9).